We begin with the raw amino-acid sequence, 1463 residues long: Probable ATP-dependent RNA helicase spindle-E (1463 aa).

Positions 131–296 constitute a Helicase ATP-binding domain; that stretch reads LKAIRENPVV…FKIPGPNSLF (166 aa). 144–151 is a binding site for ATP; that stretch reads GMTGCGKT. The DEAH box signature appears at 243–246; it reads DEVH. One can recognise a Helicase C-terminal domain in the interval 348 to 531; that stretch reads VCDRFIDEFE…NVVLKTKLLD (184 aa). Positions 951–1016 constitute a Tudor domain; the sequence is AFKQRDIVAA…QLRGTPLDMF (66 aa).

It belongs to the DEAD box helicase family. DEAH subfamily.

It is found in the cytoplasm. The catalysed reaction is ATP + H2O = ADP + phosphate + H(+). Its function is as follows. Probable ATP-binding RNA helicase which plays a central role during gametogenesis by repressing transposable elements and preventing their mobilization, which is essential for the germline integrity. Acts via the piRNA metabolic process, which mediates the repression of transposable elements during meiosis by forming complexes composed of piRNAs and Piwi proteins and govern the methylation and subsequent repression of transposons. This is Probable ATP-dependent RNA helicase spindle-E (spn-E) from Anopheles gambiae (African malaria mosquito).